A 237-amino-acid polypeptide reads, in one-letter code: Necrosis-inducing protein NPP1 (237 aa).

The signal sequence occupies residues 1 to 19 (MNVLTFLIAAAVSLAVVQA). N-linked (GlcNAc...) asparagine glycosylation is present at Asn-67. The short motif at 103 to 113 (AIMYSWYFPKD) is the Conserved undecapeptide motif element. The Conserved heptapetpide motif motif lies at 120–126 (GHRHDWE).

It belongs to the Necrosis inducing protein (NPP1) family.

The protein localises to the secreted. Secreted effector that acts as a pathogen-associated molecular pattern (PAMP) recognized by the plant immune system. Induces necrotic cell death and ethylene biosynthesis in parsley. Stimulates early induced host cellular responses implicated in elicitor signal transmission such as increased levels of cytoplasmic calcium, production of reactive oxygen species (ROS), and MAP kinase activation. Infiltration of NPP1 into leaves of Arabidopsis thaliana results in transcript accumulation of pathogenesis-related (PR) genes, production of ROS and ethylene, callose apposition, and hypersensitive response (HR)-like cell death. NPP1-mediated induction of the PR1 gene is salicylic acid-dependent, and requires both functional NDR1 and PAD4. This Phytophthora nicotianae (Potato buckeye rot agent) protein is Necrosis-inducing protein NPP1.